The chain runs to 201 residues: dITP/XTP pyrophosphatase (201 aa).

Position 8–13 (8–13) interacts with substrate; the sequence is SNNPGK. Residues Glu40 and Asp69 each coordinate Mg(2+). Residue Asp69 is the Proton acceptor of the active site. Substrate is bound by residues Ser70, 155 to 158, Lys178, and 183 to 184; these read FGYD and HR.

Belongs to the HAM1 NTPase family. As to quaternary structure, homodimer. Requires Mg(2+) as cofactor.

It catalyses the reaction XTP + H2O = XMP + diphosphate + H(+). It carries out the reaction dITP + H2O = dIMP + diphosphate + H(+). The enzyme catalyses ITP + H2O = IMP + diphosphate + H(+). Pyrophosphatase that catalyzes the hydrolysis of nucleoside triphosphates to their monophosphate derivatives, with a high preference for the non-canonical purine nucleotides XTP (xanthosine triphosphate), dITP (deoxyinosine triphosphate) and ITP. Seems to function as a house-cleaning enzyme that removes non-canonical purine nucleotides from the nucleotide pool, thus preventing their incorporation into DNA/RNA and avoiding chromosomal lesions. The protein is dITP/XTP pyrophosphatase of Ralstonia nicotianae (strain ATCC BAA-1114 / GMI1000) (Ralstonia solanacearum).